The primary structure comprises 162 residues: 2-C-methyl-D-erythritol 2,4-cyclodiphosphate synthase (162 aa).

Positions 12 and 14 each coordinate a divalent metal cation. 4-CDP-2-C-methyl-D-erythritol 2-phosphate is bound by residues 12-14 (DVH) and 38-39 (HS). An a divalent metal cation-binding site is contributed by H46. 4-CDP-2-C-methyl-D-erythritol 2-phosphate is bound by residues 60-62 (DIG), 65-69 (FPDTD), and R146.

It belongs to the IspF family. Homotrimer. The cofactor is a divalent metal cation.

The enzyme catalyses 4-CDP-2-C-methyl-D-erythritol 2-phosphate = 2-C-methyl-D-erythritol 2,4-cyclic diphosphate + CMP. The protein operates within isoprenoid biosynthesis; isopentenyl diphosphate biosynthesis via DXP pathway; isopentenyl diphosphate from 1-deoxy-D-xylulose 5-phosphate: step 4/6. Functionally, involved in the biosynthesis of isopentenyl diphosphate (IPP) and dimethylallyl diphosphate (DMAPP), two major building blocks of isoprenoid compounds. Catalyzes the conversion of 4-diphosphocytidyl-2-C-methyl-D-erythritol 2-phosphate (CDP-ME2P) to 2-C-methyl-D-erythritol 2,4-cyclodiphosphate (ME-CPP) with a corresponding release of cytidine 5-monophosphate (CMP). This chain is 2-C-methyl-D-erythritol 2,4-cyclodiphosphate synthase, found in Bordetella parapertussis (strain 12822 / ATCC BAA-587 / NCTC 13253).